A 445-amino-acid polypeptide reads, in one-letter code: 2-oxoisovalerate dehydrogenase subunit alpha, mitochondrial (445 aa).

A mitochondrion-targeting transit peptide spans 1–45 (MAVAIAAARVWRLNRGLSQAALLLLRRPGARGLARSHPRRQQQQF). A disordered region spans residues 33–54 (LARSHPRRQQQQFSSLDDKPQF). Thiamine diphosphate contacts are provided by tyrosine 158 and arginine 159. Residue serine 206 participates in K(+) binding. Serine 207 contributes to the thiamine diphosphate binding site. 3 residues coordinate K(+): proline 208, threonine 211, and glutamine 212. Glutamate 238 contacts Mg(2+). Thiamine diphosphate-binding residues include glycine 239, alanine 240, and arginine 265. Asparagine 267 and tyrosine 269 together coordinate Mg(2+). Histidine 336 serves as a coordination point for thiamine diphosphate. Serine 337 carries the phosphoserine; by BCKDK modification. Threonine 338 carries the post-translational modification Phosphothreonine. Phosphoserine is present on residues serine 339 and serine 347. Position 356 is an N6-acetyllysine; alternate (lysine 356). Lysine 356 is subject to N6-succinyllysine; alternate. Lysine 380 bears the N6-succinyllysine mark.

This sequence belongs to the BCKDHA family. Heterotetramer of 2 alpha/BCKDHA and 2 beta chains/BCKDHB that forms the branched-chain alpha-keto acid decarboxylase (E1) component of the BCKD complex. The branched-chain alpha-ketoacid dehydrogenase is a large complex composed of three major building blocks E1, E2 and E3. It is organized around E2, a 24-meric cubic core composed of DBT, to which are associated 6 to 12 copies of E1, and approximately 6 copies of the dehydrogenase E3, a DLD dimer. Interacts with PPM1K. Requires thiamine diphosphate as cofactor. It depends on Mg(2+) as a cofactor. Post-translationally, phosphorylated at Ser-337 by BCKDK and dephosphorylated by protein phosphatase PPM1K.

Its subcellular location is the mitochondrion matrix. The catalysed reaction is N(6)-[(R)-lipoyl]-L-lysyl-[protein] + 3-methyl-2-oxobutanoate + H(+) = N(6)-[(R)-S(8)-2-methylpropanoyldihydrolipoyl]-L-lysyl-[protein] + CO2. In terms of biological role, together with BCKDHB forms the heterotetrameric E1 subunit of the mitochondrial branched-chain alpha-ketoacid dehydrogenase (BCKD) complex. The BCKD complex catalyzes the multi-step oxidative decarboxylation of alpha-ketoacids derived from the branched-chain amino-acids valine, leucine and isoleucine producing CO2 and acyl-CoA which is subsequently utilized to produce energy. The E1 subunit catalyzes the first step with the decarboxylation of the alpha-ketoacid forming an enzyme-product intermediate. A reductive acylation mediated by the lipoylamide cofactor of E2 extracts the acyl group from the E1 active site for the next step of the reaction. This Pan troglodytes (Chimpanzee) protein is 2-oxoisovalerate dehydrogenase subunit alpha, mitochondrial (BCKDHA).